The sequence spans 396 residues: S-adenosylmethionine synthase 1 (396 aa).

Glutamate 12 contributes to the Mg(2+) binding site. Position 18 (histidine 18) interacts with ATP. Glutamate 46 contributes to the K(+) binding site. Glutamate 59 and glutamine 102 together coordinate L-methionine. ATP is bound by residues 170–172 (DGK), 238–241 (SGRF), aspartate 249, 255–256 (RK), alanine 272, lysine 276, and lysine 280. An L-methionine-binding site is contributed by aspartate 249. Lysine 280 contacts L-methionine.

Belongs to the AdoMet synthase family. In terms of assembly, homotetramer. It depends on Mn(2+) as a cofactor. Requires Mg(2+) as cofactor. The cofactor is Co(2+). K(+) is required as a cofactor.

Its subcellular location is the cytoplasm. The enzyme catalyses L-methionine + ATP + H2O = S-adenosyl-L-methionine + phosphate + diphosphate. The protein operates within amino-acid biosynthesis; S-adenosyl-L-methionine biosynthesis; S-adenosyl-L-methionine from L-methionine: step 1/1. Functionally, catalyzes the formation of S-adenosylmethionine from methionine and ATP. The reaction comprises two steps that are both catalyzed by the same enzyme: formation of S-adenosylmethionine (AdoMet) and triphosphate, and subsequent hydrolysis of the triphosphate. This chain is S-adenosylmethionine synthase 1 (SAM1), found in Oryza sativa subsp. japonica (Rice).